The sequence spans 474 residues: P2X purinoceptor 2 (474 aa).

Residues 1-42 (MAATHPKAPTAQRLRQGWSAFWDYETPKVIVVRNRPLGVVYR) lie on the Cytoplasmic side of the membrane. Residues 43–60 (AVQLLILLYFVWYVFIVQ) form a helical membrane-spanning segment. Over 61–333 (KSYQDSETGP…IVHGQAGKFS (273 aa)) the chain is Extracellular. Lys-77 and Lys-79 together coordinate ATP. 3 disulfides stabilise this stretch: Cys-121–Cys-172, Cys-132–Cys-155, and Cys-138–Cys-166. An N-linked (GlcNAc...) asparagine glycan is attached at Asn-129. Asn-190 carries N-linked (GlcNAc...) asparagine glycosylation. Residue Thr-192 participates in ATP binding. The cysteines at positions 222 and 232 are disulfide-linked. Residue Asn-247 is glycosylated (N-linked (GlcNAc...) asparagine). Cys-266 and Cys-275 are oxidised to a cystine. Residues Ser-292, Asn-296, and Arg-298 each contribute to the ATP site. An N-linked (GlcNAc...) asparagine glycan is attached at Asn-306. Lys-315 is a binding site for ATP. Residues 316-329 (AYGIRIDVIVHGQA) are pore-forming motif. A helical membrane pass occupies residues 334–354 (LIPTIINLATALTSIGVGSFL). Residues 355–474 (CDWILLTFMN…PTDPKGLAQL (120 aa)) are Cytoplasmic-facing. Residues 445–474 (PDRCVGQGLPSSESPLQDSTPTDPKGLAQL) form a disordered region. The segment covering 453–466 (LPSSESPLQDSTPT) has biased composition (polar residues).

It belongs to the P2X receptor family. As to quaternary structure, homotrimer and heterotrimer; functional P2XRs are organized as homomeric and heteromeric trimers. Homotrimer. Forms heterodimer with P2RX1. Forms heterotrimer with P2RX6. Forms heterotrimer with P2RX3. Express in organ of Corti.

Its subcellular location is the cell membrane. It carries out the reaction Ca(2+)(in) = Ca(2+)(out). It catalyses the reaction K(+)(in) = K(+)(out). The enzyme catalyses Na(+)(in) = Na(+)(out). With respect to regulation, fast activation by external ATP. Exhibits slow desensitization during prolonged ATP activation. Not sensitive to the ATP agonist:alpha/beta-methylene-ATP. ATP-gated nonselective transmembrane cation channel permeable to potassium, sodium and calcium. Activation by extracellular ATP induces a variety of cellular responses, such as excitatory postsynaptic responses in sensory neurons, neuromuscular junctions (NMJ) formation, hearing, perception of taste and peristalsis. In the inner ear, regulates sound transduction and auditory neurotransmission, outer hair cell electromotility, inner ear gap junctions, and K(+) recycling. Mediates synaptic transmission between neurons and from neurons to smooth muscle. The protein is P2X purinoceptor 2 (P2RX2) of Cavia porcellus (Guinea pig).